The sequence spans 181 residues: Inner membrane-spanning protein YciB (181 aa).

The next 5 membrane-spanning stretches (helical) occupy residues 10 to 30 (LIIF…GALI), 50 to 70 (MQLI…ALHD), 80 to 100 (IVYV…KPAI), 120 to 140 (WAWV…AYHL), and 148 to 168 (FKVF…GGYI).

Belongs to the YciB family.

The protein resides in the cell inner membrane. Functionally, plays a role in cell envelope biogenesis, maintenance of cell envelope integrity and membrane homeostasis. The sequence is that of Inner membrane-spanning protein YciB from Vibrio cholerae serotype O1 (strain ATCC 39315 / El Tor Inaba N16961).